The sequence spans 251 residues: Enolase-phosphatase E1 (251 aa).

Asp-13 and Glu-15 together coordinate Mg(2+). Substrate is bound by residues 137–138 (SS) and Lys-183. Asp-210 is a binding site for Mg(2+).

It belongs to the HAD-like hydrolase superfamily. MasA/MtnC family. As to quaternary structure, monomer. The cofactor is Mg(2+).

It localises to the cytoplasm. The protein localises to the nucleus. The catalysed reaction is 5-methylsulfanyl-2,3-dioxopentyl phosphate + H2O = 1,2-dihydroxy-5-(methylsulfanyl)pent-1-en-3-one + phosphate. The protein operates within amino-acid biosynthesis; L-methionine biosynthesis via salvage pathway; L-methionine from S-methyl-5-thio-alpha-D-ribose 1-phosphate: step 3/6. It participates in amino-acid biosynthesis; L-methionine biosynthesis via salvage pathway; L-methionine from S-methyl-5-thio-alpha-D-ribose 1-phosphate: step 4/6. Bifunctional enzyme that catalyzes the enolization of 2,3-diketo-5-methylthiopentyl-1-phosphate (DK-MTP-1-P) into the intermediate 2-hydroxy-3-keto-5-methylthiopentenyl-1-phosphate (HK-MTPenyl-1-P), which is then dephosphorylated to form the acireductone 1,2-dihydroxy-3-keto-5-methylthiopentene (DHK-MTPene). The protein is Enolase-phosphatase E1 of Candida glabrata (strain ATCC 2001 / BCRC 20586 / JCM 3761 / NBRC 0622 / NRRL Y-65 / CBS 138) (Yeast).